Consider the following 617-residue polypeptide: Thioredoxin reductase (617 aa).

Residues 127–128, 147–150, 163–164, 168–172, alanine 237, aspartate 433, and 440–442 each bind FAD; these read PG, DYVK, TC, GCVPK, and ELA. A disulfide bridge connects residues cysteine 164 and cysteine 169. The segment at 514-528 is loop important for the interaction with TRX1; that stretch reads HRQKHIRAQKDEYDL. Position 585 (histidine 585) interacts with FAD. The active-site Proton acceptor is the histidine 585. A disulfide bond links cysteine 611 and cysteine 616.

The protein belongs to the class-I pyridine nucleotide-disulfide oxidoreductase family. Homodimer. It depends on FAD as a cofactor.

The protein localises to the mitochondrion. It is found in the cytoplasm. It catalyses the reaction [thioredoxin]-dithiol + NADP(+) = [thioredoxin]-disulfide + NADPH + H(+). Its function is as follows. Catalyzes the transfer of electrons from NADPH to thioredoxins TRX1, TRX2 and TRX3, which in turn act as reductants of disulfide containing proteins. Able to reduce nitroglutathione (GSNO), a compound involved in the transport of nitric oxide (NO); however, TRX1 is more efficient in reducing GSNO. Has no catalytic activity towards oxidized glutathione (GSSG). This chain is Thioredoxin reductase, found in Plasmodium falciparum (isolate 3D7).